We begin with the raw amino-acid sequence, 146 residues long: Phospholipase A2 147 (146 aa).

An N-terminal signal peptide occupies residues 1–19 (MYPAHLLVLLAVCVSLLGA). The propeptide occupies 20–27 (ASVPPQPL). Disulfide bonds link C38–C98, C54–C145, C56–C72, C71–C126, C78–C119, C87–C112, and C105–C117. Ca(2+)-binding residues include Y55, G57, and G59. Residue H75 is part of the active site. Ca(2+) is bound at residue D76. D120 is a catalytic residue.

Belongs to the phospholipase A2 family. Group I subfamily. D49 sub-subfamily. It depends on Ca(2+) as a cofactor. As to expression, expressed by the venom gland.

It localises to the secreted. The catalysed reaction is a 1,2-diacyl-sn-glycero-3-phosphocholine + H2O = a 1-acyl-sn-glycero-3-phosphocholine + a fatty acid + H(+). Functionally, snake venom phospholipase A2 (PLA2) that inhibits collagen-induced platelet aggregation. PLA2 catalyzes the calcium-dependent hydrolysis of the 2-acyl groups in 3-sn-phosphoglycerides. This is Phospholipase A2 147 from Drysdalia coronoides (White-lipped snake).